We begin with the raw amino-acid sequence, 322 residues long: Coelomocyte uptake defective protein 15 (322 aa).

Residues 1 to 20 (MVNSLSRILFCSLLIFSVIS) form the signal peptide. N-linked (GlcNAc...) asparagine glycans are attached at residues Asn62, Asn98, Asn144, Asn170, Asn180, Asn183, and Asn222. A helical membrane pass occupies residues 244–264 (LFGIMITFGTLLLLTALFYAA).

It belongs to the OSTM1 family.

The protein resides in the membrane. In terms of biological role, modulates the transport of substances from the endosomal to lysosomal compartments. Plays a role in lysosome formation and function in coelomocytes. The chain is Coelomocyte uptake defective protein 15 from Caenorhabditis elegans.